The chain runs to 206 residues: Large ribosomal subunit protein uL4 (206 aa).

Residues 48–97 (THAVKNRSLVSGGGKKPWKQKHTGRARQGSTRASQWVGGGKAMGPKPRDY) form a disordered region. Residues 63 to 72 (KPWKQKHTGR) show a composition bias toward basic residues.

This sequence belongs to the universal ribosomal protein uL4 family. Part of the 50S ribosomal subunit.

Its function is as follows. One of the primary rRNA binding proteins, this protein initially binds near the 5'-end of the 23S rRNA. It is important during the early stages of 50S assembly. It makes multiple contacts with different domains of the 23S rRNA in the assembled 50S subunit and ribosome. Forms part of the polypeptide exit tunnel. This chain is Large ribosomal subunit protein uL4, found in Anaeromyxobacter sp. (strain K).